Reading from the N-terminus, the 1073-residue chain is Carbamoyl phosphate synthase large chain (1073 aa).

The carboxyphosphate synthetic domain stretch occupies residues 1–402; sequence MPRRIDVRKV…ALQKAIRMLD (402 aa). ATP contacts are provided by R129, R169, G175, G176, K208, L210, E215, G241, V242, H243, Q284, and E299. In terms of domain architecture, ATP-grasp 1 spans 133–328; that stretch reads RETMMKAGLP…LAYIAAKLAL (196 aa). Mg(2+)-binding residues include Q284, E299, and N301. Residues Q284, E299, and N301 each coordinate Mn(2+). The oligomerization domain stretch occupies residues 403–555; sequence IGEPGVVAGP…MSYNAYEDDE (153 aa). The carbamoyl phosphate synthetic domain stretch occupies residues 556–944; the sequence is PITTGRPRLI…LKSWLSVQGN (389 aa). Positions 681 to 871 constitute an ATP-grasp 2 domain; it reads SQLLEELGIK…LMRAAAEAAL (191 aa). ATP-binding residues include R717, K756, L758, E763, G787, V788, H789, S790, Q830, and E842. Residues Q830, E842, and N844 each coordinate Mg(2+). Positions 830, 842, and 844 each coordinate Mn(2+). An MGS-like domain is found at 944 to 1073; sequence NRIPPAGSIV…EYWGPNVEPF (130 aa). An allosteric domain region spans residues 945-1073; that stretch reads RIPPAGSIVL…EYWGPNVEPF (129 aa).

This sequence belongs to the CarB family. Composed of two chains; the small (or glutamine) chain promotes the hydrolysis of glutamine to ammonia, which is used by the large (or ammonia) chain to synthesize carbamoyl phosphate. Tetramer of heterodimers (alpha,beta)4. Requires Mg(2+) as cofactor. The cofactor is Mn(2+).

It catalyses the reaction hydrogencarbonate + L-glutamine + 2 ATP + H2O = carbamoyl phosphate + L-glutamate + 2 ADP + phosphate + 2 H(+). It carries out the reaction hydrogencarbonate + NH4(+) + 2 ATP = carbamoyl phosphate + 2 ADP + phosphate + 2 H(+). Its pathway is amino-acid biosynthesis; L-arginine biosynthesis; carbamoyl phosphate from bicarbonate: step 1/1. The protein operates within pyrimidine metabolism; UMP biosynthesis via de novo pathway; (S)-dihydroorotate from bicarbonate: step 1/3. Large subunit of the glutamine-dependent carbamoyl phosphate synthetase (CPSase). CPSase catalyzes the formation of carbamoyl phosphate from the ammonia moiety of glutamine, carbonate, and phosphate donated by ATP, constituting the first step of 2 biosynthetic pathways, one leading to arginine and/or urea and the other to pyrimidine nucleotides. The large subunit (synthetase) binds the substrates ammonia (free or transferred from glutamine from the small subunit), hydrogencarbonate and ATP and carries out an ATP-coupled ligase reaction, activating hydrogencarbonate by forming carboxy phosphate which reacts with ammonia to form carbamoyl phosphate. The chain is Carbamoyl phosphate synthase large chain from Hyperthermus butylicus (strain DSM 5456 / JCM 9403 / PLM1-5).